Consider the following 521-residue polypeptide: GMP synthase [glutamine-hydrolyzing] (521 aa).

In terms of domain architecture, Glutamine amidotransferase type-1 spans 8 to 203 (KILILDFGAQ…VVDVCGCQTL (196 aa)). Cys85 acts as the Nucleophile in catalysis. Active-site residues include His177 and Glu179. The region spanning 204 to 396 (WTAANIIDDQ…LGLPRTMVYR (193 aa)) is the GMPS ATP-PPase domain. 231 to 237 (SGGVDSS) serves as a coordination point for ATP.

Homodimer.

It catalyses the reaction XMP + L-glutamine + ATP + H2O = GMP + L-glutamate + AMP + diphosphate + 2 H(+). It participates in purine metabolism; GMP biosynthesis; GMP from XMP (L-Gln route): step 1/1. Catalyzes the synthesis of GMP from XMP. The polypeptide is GMP synthase [glutamine-hydrolyzing] (Stenotrophomonas maltophilia (strain R551-3)).